The primary structure comprises 260 residues: Trans-aconitate 2-methyltransferase (260 aa).

It belongs to the methyltransferase superfamily. Tam family.

It is found in the cytoplasm. It catalyses the reaction trans-aconitate + S-adenosyl-L-methionine = (E)-3-(methoxycarbonyl)pent-2-enedioate + S-adenosyl-L-homocysteine. In terms of biological role, catalyzes the S-adenosylmethionine monomethyl esterification of trans-aconitate. The protein is Trans-aconitate 2-methyltransferase of Methylobacterium radiotolerans (strain ATCC 27329 / DSM 1819 / JCM 2831 / NBRC 15690 / NCIMB 10815 / 0-1).